Here is a 316-residue protein sequence, read N- to C-terminus: 4-hydroxy-3-methylbut-2-enyl diphosphate reductase (316 aa).

Residue Cys-12 participates in [4Fe-4S] cluster binding. Residues His-41 and His-74 each contribute to the (2E)-4-hydroxy-3-methylbut-2-enyl diphosphate site. Positions 41 and 74 each coordinate dimethylallyl diphosphate. Isopentenyl diphosphate-binding residues include His-41 and His-74. Residue Cys-96 coordinates [4Fe-4S] cluster. Residue His-124 participates in (2E)-4-hydroxy-3-methylbut-2-enyl diphosphate binding. His-124 provides a ligand contact to dimethylallyl diphosphate. Position 124 (His-124) interacts with isopentenyl diphosphate. Catalysis depends on Glu-126, which acts as the Proton donor. Thr-167 contacts (2E)-4-hydroxy-3-methylbut-2-enyl diphosphate. Cys-197 serves as a coordination point for [4Fe-4S] cluster. (2E)-4-hydroxy-3-methylbut-2-enyl diphosphate-binding residues include Ser-225, Ser-226, Asn-227, and Ser-269. Residues Ser-225, Ser-226, Asn-227, and Ser-269 each contribute to the dimethylallyl diphosphate site. The isopentenyl diphosphate site is built by Ser-225, Ser-226, Asn-227, and Ser-269.

It belongs to the IspH family. In terms of assembly, homodimer. It depends on [4Fe-4S] cluster as a cofactor.

It catalyses the reaction isopentenyl diphosphate + 2 oxidized [2Fe-2S]-[ferredoxin] + H2O = (2E)-4-hydroxy-3-methylbut-2-enyl diphosphate + 2 reduced [2Fe-2S]-[ferredoxin] + 2 H(+). It carries out the reaction dimethylallyl diphosphate + 2 oxidized [2Fe-2S]-[ferredoxin] + H2O = (2E)-4-hydroxy-3-methylbut-2-enyl diphosphate + 2 reduced [2Fe-2S]-[ferredoxin] + 2 H(+). It functions in the pathway isoprenoid biosynthesis; dimethylallyl diphosphate biosynthesis; dimethylallyl diphosphate from (2E)-4-hydroxy-3-methylbutenyl diphosphate: step 1/1. The protein operates within isoprenoid biosynthesis; isopentenyl diphosphate biosynthesis via DXP pathway; isopentenyl diphosphate from 1-deoxy-D-xylulose 5-phosphate: step 6/6. In terms of biological role, catalyzes the conversion of 1-hydroxy-2-methyl-2-(E)-butenyl 4-diphosphate (HMBPP) into a mixture of isopentenyl diphosphate (IPP) and dimethylallyl diphosphate (DMAPP). Acts in the terminal step of the DOXP/MEP pathway for isoprenoid precursor biosynthesis. The sequence is that of 4-hydroxy-3-methylbut-2-enyl diphosphate reductase from Escherichia coli O6:H1 (strain CFT073 / ATCC 700928 / UPEC).